The sequence spans 242 residues: Probable transcriptional regulatory protein EF_0663 (242 aa).

The span at 1-14 (MSGHSKWSNIQGRK) shows a compositional bias: polar residues. Residues 1–22 (MSGHSKWSNIQGRKNAQDAKRG) are disordered.

It belongs to the TACO1 family.

Its subcellular location is the cytoplasm. This is Probable transcriptional regulatory protein EF_0663 from Enterococcus faecalis (strain ATCC 700802 / V583).